Consider the following 55-residue polypeptide: Riparin-1.4 (55 aa).

The N-terminal stretch at 1–15 (MKIIVVLAVLMLVSA) is a signal peptide. Residues 16–41 (QVCLVSAAEMGHSSDNELSSRDLVKR) constitute a propeptide that is removed on maturation. Cysteine 47 and cysteine 53 are joined by a disulfide. The propeptide occupies 54 to 55 (NH).

As to expression, expressed by the skin glands.

It is found in the secreted. The sequence is that of Riparin-1.4 from Crinia riparia (Streambank froglet).